The sequence spans 179 residues: Large ribosomal subunit protein uL5 (179 aa).

Belongs to the universal ribosomal protein uL5 family. As to quaternary structure, part of the 50S ribosomal subunit; part of the 5S rRNA/L5/L18/L25 subcomplex. Contacts the 5S rRNA and the P site tRNA. Forms a bridge to the 30S subunit in the 70S ribosome.

This is one of the proteins that bind and probably mediate the attachment of the 5S RNA into the large ribosomal subunit, where it forms part of the central protuberance. In the 70S ribosome it contacts protein S13 of the 30S subunit (bridge B1b), connecting the 2 subunits; this bridge is implicated in subunit movement. Contacts the P site tRNA; the 5S rRNA and some of its associated proteins might help stabilize positioning of ribosome-bound tRNAs. This chain is Large ribosomal subunit protein uL5, found in Shewanella sp. (strain MR-4).